We begin with the raw amino-acid sequence, 864 residues long: DNA mismatch repair protein MutS (864 aa).

607-614 contributes to the ATP binding site; the sequence is GPNMGGKS.

It belongs to the DNA mismatch repair MutS family.

Its function is as follows. This protein is involved in the repair of mismatches in DNA. It is possible that it carries out the mismatch recognition step. This protein has a weak ATPase activity. The chain is DNA mismatch repair protein MutS from Neisseria meningitidis serogroup B (strain ATCC BAA-335 / MC58).